The sequence spans 70 residues: U-actitoxin-Avd11a (70 aa).

Positions 36 to 70 constitute a ShKT domain; sequence CNDYKSSSYCRSVGSRNECGIHKYRMYCRKTCGSC. Cystine bridges form between Cys36/Cys70, Cys45/Cys63, and Cys54/Cys67. The interval 58–59 is crucial for binding to potassium channels; that stretch reads KY.

Belongs to the sea anemone type 1 potassium channel toxin family. Type 1b subfamily.

It is found in the secreted. It localises to the nematocyst. Its function is as follows. Inhibits voltage-gated potassium channels (Kv1/KCNA). The chain is U-actitoxin-Avd11a from Anemonia viridis (Snakelocks anemone).